Reading from the N-terminus, the 70-residue chain is Small ribosomal subunit protein bS21 (70 aa).

It belongs to the bacterial ribosomal protein bS21 family.

This Neisseria gonorrhoeae (strain ATCC 700825 / FA 1090) protein is Small ribosomal subunit protein bS21.